The primary structure comprises 332 residues: MMKKPVVIGLAVVVLAAVVAGGYWWYQSRQDNGLTLYGNVDIRTVNLSFRVGGRVESLAVDEGDAIKAGQVLGELDHKPYEIALMQAKAGVSVAQAQYDLMLAGYRNEEIAQAAAAVKQAQAAYDYAQNFYNRQQGLWKSRTISANDLENARSSRDQAQATLKSAQDKLRQYRSGNREQDIAQAKASLEQAQAQLAQAELNLQDSTLIAPSDGTLLTRAVEPGTVLNEGGTVFTVSLTRPVWVRAYVDERNLDQAQPGRKVLLYTDGRPDKPYHGQIGFVSPTAEFTPKTVETPDLRTDLVYRLRIVVTDADDALRQGMPVTVQFGDEAGHE.

The N-terminal stretch at 1 to 16 (MMKKPVVIGLAVVVLA) is a signal peptide. Positions 107 to 209 (NEEIAQAAAA…LNLQDSTLIA (103 aa)) form a coiled coil.

The protein belongs to the UPF0194 family.

It is found in the periplasm. In Escherichia coli (strain K12 / MC4100 / BW2952), this protein is UPF0194 membrane protein YbhG.